Here is a 466-residue protein sequence, read N- to C-terminus: Soluble pyridine nucleotide transhydrogenase (466 aa).

Position 36 to 45 (36 to 45 (ERYHNVGGGC)) interacts with FAD.

Belongs to the class-I pyridine nucleotide-disulfide oxidoreductase family. FAD serves as cofactor.

It is found in the cytoplasm. The enzyme catalyses NAD(+) + NADPH = NADH + NADP(+). Functionally, conversion of NADPH, generated by peripheral catabolic pathways, to NADH, which can enter the respiratory chain for energy generation. The protein is Soluble pyridine nucleotide transhydrogenase of Salmonella paratyphi A (strain ATCC 9150 / SARB42).